Reading from the N-terminus, the 297-residue chain is Small ribosomal subunit protein uS9m (297 aa).

The segment at 278 to 297 (VERKKPGKRKARKMPTWVKR) is disordered.

The protein belongs to the universal ribosomal protein uS9 family.

The protein resides in the mitochondrion. This chain is Small ribosomal subunit protein uS9m (MRPS9), found in Kluyveromyces lactis (strain ATCC 8585 / CBS 2359 / DSM 70799 / NBRC 1267 / NRRL Y-1140 / WM37) (Yeast).